The primary structure comprises 458 residues: tRNA modification GTPase MnmE (458 aa).

(6S)-5-formyl-5,6,7,8-tetrahydrofolate contacts are provided by Arg22, Glu84, and Arg123. Residues 220–379 enclose the TrmE-type G domain; that stretch reads GIATAIIGRP…LEKAIADLFF (160 aa). Asn230 contacts K(+). GTP-binding positions include 230-235, 249-255, and 274-277; these read NVGKSS, TDIAGTT, and DTAG. Ser234 serves as a coordination point for Mg(2+). K(+) is bound by residues Thr249, Ile251, and Thr254. Residue Thr255 coordinates Mg(2+). (6S)-5-formyl-5,6,7,8-tetrahydrofolate is bound at residue Lys458.

This sequence belongs to the TRAFAC class TrmE-Era-EngA-EngB-Septin-like GTPase superfamily. TrmE GTPase family. As to quaternary structure, homodimer. Heterotetramer of two MnmE and two MnmG subunits. It depends on K(+) as a cofactor.

Its subcellular location is the cytoplasm. Exhibits a very high intrinsic GTPase hydrolysis rate. Involved in the addition of a carboxymethylaminomethyl (cmnm) group at the wobble position (U34) of certain tRNAs, forming tRNA-cmnm(5)s(2)U34. The chain is tRNA modification GTPase MnmE from Bacillus thuringiensis (strain Al Hakam).